The chain runs to 187 residues: Protein GrpE (187 aa).

Residues 1-31 (MEKKETKNDAEKNNKQDNKSTKSQKKENLNL) form a disordered region.

Belongs to the GrpE family. As to quaternary structure, homodimer.

It is found in the cytoplasm. In terms of biological role, participates actively in the response to hyperosmotic and heat shock by preventing the aggregation of stress-denatured proteins, in association with DnaK and GrpE. It is the nucleotide exchange factor for DnaK and may function as a thermosensor. Unfolded proteins bind initially to DnaJ; upon interaction with the DnaJ-bound protein, DnaK hydrolyzes its bound ATP, resulting in the formation of a stable complex. GrpE releases ADP from DnaK; ATP binding to DnaK triggers the release of the substrate protein, thus completing the reaction cycle. Several rounds of ATP-dependent interactions between DnaJ, DnaK and GrpE are required for fully efficient folding. The chain is Protein GrpE from Borrelia garinii subsp. bavariensis (strain ATCC BAA-2496 / DSM 23469 / PBi) (Borreliella bavariensis).